The following is a 179-amino-acid chain: Large ribosomal subunit protein uL10 (179 aa).

Belongs to the universal ribosomal protein uL10 family. In terms of assembly, part of the ribosomal stalk of the 50S ribosomal subunit. The N-terminus interacts with L11 and the large rRNA to form the base of the stalk. The C-terminus forms an elongated spine to which L12 dimers bind in a sequential fashion forming a multimeric L10(L12)X complex.

Functionally, forms part of the ribosomal stalk, playing a central role in the interaction of the ribosome with GTP-bound translation factors. The chain is Large ribosomal subunit protein uL10 from Mycolicibacterium vanbaalenii (strain DSM 7251 / JCM 13017 / BCRC 16820 / KCTC 9966 / NRRL B-24157 / PYR-1) (Mycobacterium vanbaalenii).